A 640-amino-acid chain; its full sequence is 1,4-alpha-glucan branching enzyme GlgB (640 aa).

The active-site Nucleophile is the aspartate 318. Residue glutamate 371 is the Proton donor of the active site.

It belongs to the glycosyl hydrolase 13 family. GlgB subfamily. As to quaternary structure, monomer.

It carries out the reaction Transfers a segment of a (1-&gt;4)-alpha-D-glucan chain to a primary hydroxy group in a similar glucan chain.. It functions in the pathway glycan biosynthesis; glycogen biosynthesis. Functionally, catalyzes the formation of the alpha-1,6-glucosidic linkages in glycogen by scission of a 1,4-alpha-linked oligosaccharide from growing alpha-1,4-glucan chains and the subsequent attachment of the oligosaccharide to the alpha-1,6 position. The polypeptide is 1,4-alpha-glucan branching enzyme GlgB (Francisella tularensis subsp. holarctica (strain LVS)).